The chain runs to 165 residues: Free methionine-R-sulfoxide reductase (165 aa).

Positions 49-149 (LLEDDTLVLG…LRQLVAQLEK (101 aa)) constitute a GAF domain.

This sequence belongs to the free Met sulfoxide reductase family.

The enzyme catalyses [thioredoxin]-disulfide + L-methionine + H2O = L-methionine (R)-S-oxide + [thioredoxin]-dithiol. Functionally, catalyzes the reversible oxidation-reduction of the R-enantiomer of free methionine sulfoxide to methionine. Specific for free L-methionine-(R)-S-oxide. The protein is Free methionine-R-sulfoxide reductase (msrC) of Escherichia coli (strain K12).